Here is a 504-residue protein sequence, read N- to C-terminus: ATP-dependent RNA helicase DBP3 (504 aa).

A compositionally biased stretch (basic and acidic residues) spans 1–14 (MSKDELKDKKRKVE). Residues 1–65 (MSKDELKDKK…KSETESFAAS (65 aa)) are disordered. The segment covering 20–53 (SKKKLKKDKKDKKDKKDKKDKKDKKEKKEKKEKK) has biased composition (basic residues). The short motif at 94 to 120 (LDFSQVSFIDQIQKEISKFPKPTPIQA) is the Q motif element. In terms of domain architecture, Helicase ATP-binding spans 123–296 (WPYLLAGKDV…SSFMSEPVKV (174 aa)). 136–143 (AETGSGKT) contacts ATP. The DEAD box signature appears at 243–246 (DEAD). Residues 325–474 (KLLELLKKYH…PVPEELKKFG (150 aa)) form the Helicase C-terminal domain.

It belongs to the DEAD box helicase family. DDX5/DBP2 subfamily.

It localises to the nucleus. The protein resides in the nucleolus. The enzyme catalyses ATP + H2O = ADP + phosphate + H(+). Functionally, ATP-dependent RNA helicase required for 60S ribosomal subunit synthesis. Involved in efficient pre-rRNA processing, predominantly at site A3, which is necessary for the normal formation of 25S and 5.8S rRNAs. This is ATP-dependent RNA helicase DBP3 (DBP3) from Kluyveromyces lactis (strain ATCC 8585 / CBS 2359 / DSM 70799 / NBRC 1267 / NRRL Y-1140 / WM37) (Yeast).